Here is a 149-residue protein sequence, read N- to C-terminus: Endothelin-1 (149 aa).

Residues 1–33 (AAETVVSGAELSLTANSGGEKTPPHAPGLLRRS) constitute a propeptide that is removed on maturation. The interval 6 to 26 (VSGAELSLTANSGGEKTPPHA) is disordered. Disulfide bonds link cysteine 36/cysteine 50 and cysteine 38/cysteine 46. Positions 57-149 (VNTPGHIAPY…ISQQLGNGKK (93 aa)) are excised as a propeptide. The segment at 93 to 107 (CQCANQKDKKCWNFC) is endothelin-like.

This sequence belongs to the endothelin/sarafotoxin family.

It is found in the secreted. In terms of biological role, endothelins are endothelium-derived vasoconstrictor peptides. Probable ligand for G-protein coupled receptors EDNRA and EDNRB which activates PTK2B, BCAR1, BCAR3 and, GTPases RAP1 and RHOA cascade in glomerular mesangial cells. Also binds the DEAR/FBXW7-AS1 receptor. Promotes mesenteric arterial wall remodeling via activation of ROCK signaling and subsequent colocalization of NFATC3 with F-actin filaments. NFATC3 then translocates to the nucleus where it subsequently promotes the transcription of the smooth muscle hypertrophy and differentiation marker ACTA2. In Cavia porcellus (Guinea pig), this protein is Endothelin-1 (EDN1).